The sequence spans 67 residues: Large ribosomal subunit protein bL35 (67 aa).

Basic residues predominate over residues 1-16 (MPKMKTKSGAKKRFRV). Positions 1–24 (MPKMKTKSGAKKRFRVRPGGTVKR) are disordered.

It belongs to the bacterial ribosomal protein bL35 family.

This is Large ribosomal subunit protein bL35 from Polaromonas naphthalenivorans (strain CJ2).